Here is a 636-residue protein sequence, read N- to C-terminus: 1-deoxy-D-xylulose-5-phosphate synthase (636 aa).

Thiamine diphosphate is bound by residues histidine 74 and 115–117; that span reads GHA. A Mg(2+)-binding site is contributed by aspartate 146. Residues 147 to 148, asparagine 175, tyrosine 285, and glutamate 368 each bind thiamine diphosphate; that span reads GA. Asparagine 175 contributes to the Mg(2+) binding site.

The protein belongs to the transketolase family. DXPS subfamily. In terms of assembly, homodimer. Mg(2+) serves as cofactor. It depends on thiamine diphosphate as a cofactor.

It catalyses the reaction D-glyceraldehyde 3-phosphate + pyruvate + H(+) = 1-deoxy-D-xylulose 5-phosphate + CO2. Its pathway is metabolic intermediate biosynthesis; 1-deoxy-D-xylulose 5-phosphate biosynthesis; 1-deoxy-D-xylulose 5-phosphate from D-glyceraldehyde 3-phosphate and pyruvate: step 1/1. In terms of biological role, catalyzes the acyloin condensation reaction between C atoms 2 and 3 of pyruvate and glyceraldehyde 3-phosphate to yield 1-deoxy-D-xylulose-5-phosphate (DXP). This is 1-deoxy-D-xylulose-5-phosphate synthase from Anaeromyxobacter dehalogenans (strain 2CP-1 / ATCC BAA-258).